Reading from the N-terminus, the 366-residue chain is Mitogen-activated protein kinase 13 (366 aa).

Residues 25–308 (YVSLTHIGSG…ASQALAHPFF (284 aa)) form the Protein kinase domain. 31-39 (IGSGAYGSV) contacts ATP. At serine 47 the chain carries Phosphoserine. Residue lysine 54 participates in ATP binding. Aspartate 150 acts as the Proton acceptor in catalysis. Phosphothreonine; by MAP2K3, MAP2K4, MAP2K6 and MAP2K7 is present on threonine 180. The TXY signature appears at 180–182 (TGY). Tyrosine 182 carries the post-translational modification Phosphotyrosine; by MAP2K3, MAP2K4, MAP2K6 and MAP2K7. At serine 350 the chain carries Phosphoserine.

The protein belongs to the protein kinase superfamily. CMGC Ser/Thr protein kinase family. MAP kinase subfamily. Interacts with MAPK8IP2. Mg(2+) is required as a cofactor. In terms of processing, dually phosphorylated on Thr-180 and Tyr-182 by MAP2K3/MKK3, MAP2K4/MKK4, MAP2K6/MKK6 and MAP2K7/MKK7, which activates the enzyme. Dephosphorylated by dual specificity phosphatase DUSP1.

The catalysed reaction is L-seryl-[protein] + ATP = O-phospho-L-seryl-[protein] + ADP + H(+). It carries out the reaction L-threonyl-[protein] + ATP = O-phospho-L-threonyl-[protein] + ADP + H(+). Its activity is regulated as follows. Activated by phosphorylation on threonine and tyrosine by dual specificity kinases, MAP2K3/MKK3 MAP2K6/MKK6, MAP2K4/MKK4 and MAP2K7/MKK7. Activation by ultraviolet radiation, hyperosmotic shock, anisomycin or by TNF-alpha is mediated by MAP2K3/MKK3. Inhibited by dual specificity phosphatase DUSP1. Functionally, serine/threonine kinase which acts as an essential component of the MAP kinase signal transduction pathway. MAPK13 is one of the four p38 MAPKs which play an important role in the cascades of cellular responses evoked by extracellular stimuli such as pro-inflammatory cytokines or physical stress leading to direct activation of transcription factors such as ELK1 and ATF2. Accordingly, p38 MAPKs phosphorylate a broad range of proteins and it has been estimated that they may have approximately 200 to 300 substrates each. MAPK13 is one of the less studied p38 MAPK isoforms. Some of the targets are downstream kinases such as MAPKAPK2, which are activated through phosphorylation and further phosphorylate additional targets. Plays a role in the regulation of protein translation by phosphorylating and inactivating EEF2K. Involved in cytoskeletal remodeling through phosphorylation of MAPT and STMN1. Mediates UV irradiation induced up-regulation of the gene expression of CXCL14. Plays an important role in the regulation of epidermal keratinocyte differentiation, apoptosis and skin tumor development. Phosphorylates the transcriptional activator MYB in response to stress which leads to rapid MYB degradation via a proteasome-dependent pathway. MAPK13 also phosphorylates and down-regulates PRKD1 during regulation of insulin secretion in pancreatic beta cells. The protein is Mitogen-activated protein kinase 13 (MAPK13) of Bos taurus (Bovine).